We begin with the raw amino-acid sequence, 343 residues long: N6-succino-2-amino-2'-deoxyadenylate synthase (343 aa).

The active-site Proton acceptor is Ser14. Positions 14, 15, 16, 17, and 18 each coordinate ATP. A dGMP-binding site is contributed by Ser14. Ser14 is a Mg(2+) binding site. A dGMP-binding site is contributed by Asn40. 3 residues coordinate ATP: Gly42, His43, and Thr44. Gly42 is a binding site for Mg(2+). Positions 127, 128, and 142 each coordinate dGMP. Residue Gln187 participates in ATP binding. A dGMP-binding site is contributed by Thr202. Thr263 lines the Mg(2+) pocket. L-aspartate is bound by residues Thr263, Val264, and Arg269. Positions 294, 297, and 330 each coordinate ATP.

Belongs to the Caudovirales PurZ family. Mg(2+) is required as a cofactor.

The enzyme catalyses dGMP + L-aspartate + ATP = (2S)-2-amino-2'-deoxyadenylo-succinate + ADP + phosphate + 2 H(+). It participates in purine metabolism. Involved in the synthesis of the atypical nucleotide dZTP (2-amino-2'-deoxyadenosine-5'-triphosphate). Catalyzes the condensation of aspartate with deoxyguanylate into dSMP (N6-succino-2-amino-2'-deoxyadenylate), which undergoes defumarylation and phosphorylation respectively by host PurB and guanylate/nucleoside diphosphate kinases to give dZTP. dZTP is integrated into the viral genome instead of adenine by the viral DNA polymerase. This Z-base probably completely replaces adenosine and forms a triple bond to the opposite T-base. The resulting non-standard viral DNA is called Z-genome. The chemically modified DNA is probably harder for the host bacteria to digest with nucleases or restriction enzymes. The polypeptide is N6-succino-2-amino-2'-deoxyadenylate synthase (Vibrio phage phiVC8).